Here is a 368-residue protein sequence, read N- to C-terminus: Phosphate acyltransferase (368 aa).

It belongs to the PlsX family. Homodimer. Probably interacts with PlsY.

The protein localises to the cytoplasm. It catalyses the reaction a fatty acyl-[ACP] + phosphate = an acyl phosphate + holo-[ACP]. It functions in the pathway lipid metabolism; phospholipid metabolism. Catalyzes the reversible formation of acyl-phosphate (acyl-PO(4)) from acyl-[acyl-carrier-protein] (acyl-ACP). This enzyme utilizes acyl-ACP as fatty acyl donor, but not acyl-CoA. The polypeptide is Phosphate acyltransferase (Granulibacter bethesdensis (strain ATCC BAA-1260 / CGDNIH1)).